Here is a 418-residue protein sequence, read N- to C-terminus: Serine hydroxymethyltransferase (418 aa).

(6S)-5,6,7,8-tetrahydrofolate is bound by residues Leu121 and 125–127 (GHL). Lys230 is subject to N6-(pyridoxal phosphate)lysine. 355-357 (SPF) contributes to the (6S)-5,6,7,8-tetrahydrofolate binding site.

It belongs to the SHMT family. Homodimer. Requires pyridoxal 5'-phosphate as cofactor.

The protein resides in the cytoplasm. The catalysed reaction is (6R)-5,10-methylene-5,6,7,8-tetrahydrofolate + glycine + H2O = (6S)-5,6,7,8-tetrahydrofolate + L-serine. It participates in one-carbon metabolism; tetrahydrofolate interconversion. The protein operates within amino-acid biosynthesis; glycine biosynthesis; glycine from L-serine: step 1/1. Catalyzes the reversible interconversion of serine and glycine with tetrahydrofolate (THF) serving as the one-carbon carrier. This reaction serves as the major source of one-carbon groups required for the biosynthesis of purines, thymidylate, methionine, and other important biomolecules. Also exhibits THF-independent aldolase activity toward beta-hydroxyamino acids, producing glycine and aldehydes, via a retro-aldol mechanism. The polypeptide is Serine hydroxymethyltransferase (Streptococcus pyogenes serotype M3 (strain ATCC BAA-595 / MGAS315)).